The following is a 166-amino-acid chain: NAD(P)H-quinone oxidoreductase subunit I, chloroplastic (166 aa).

4Fe-4S ferredoxin-type domains follow at residues 55–84 (GRIH…VDWK) and 95–124 (LNYS…MTEE). 8 residues coordinate [4Fe-4S] cluster: Cys-64, Cys-67, Cys-70, Cys-74, Cys-104, Cys-107, Cys-110, and Cys-114.

Belongs to the complex I 23 kDa subunit family. As to quaternary structure, NDH is composed of at least 16 different subunits, 5 of which are encoded in the nucleus. [4Fe-4S] cluster is required as a cofactor.

The protein localises to the plastid. Its subcellular location is the chloroplast thylakoid membrane. The catalysed reaction is a plastoquinone + NADH + (n+1) H(+)(in) = a plastoquinol + NAD(+) + n H(+)(out). The enzyme catalyses a plastoquinone + NADPH + (n+1) H(+)(in) = a plastoquinol + NADP(+) + n H(+)(out). NDH shuttles electrons from NAD(P)H:plastoquinone, via FMN and iron-sulfur (Fe-S) centers, to quinones in the photosynthetic chain and possibly in a chloroplast respiratory chain. The immediate electron acceptor for the enzyme in this species is believed to be plastoquinone. Couples the redox reaction to proton translocation, and thus conserves the redox energy in a proton gradient. The protein is NAD(P)H-quinone oxidoreductase subunit I, chloroplastic of Aphanactis jamesoniana.